The sequence spans 399 residues: Chorismate synthase (399 aa).

Positions 40 and 46 each coordinate NADP(+). FMN contacts are provided by residues 135-137, 256-257, Gly-301, 316-320, and Arg-342; these read RAS, QA, and KPIAT.

The protein belongs to the chorismate synthase family. As to quaternary structure, homotetramer. It depends on FMNH2 as a cofactor.

It catalyses the reaction 5-O-(1-carboxyvinyl)-3-phosphoshikimate = chorismate + phosphate. It functions in the pathway metabolic intermediate biosynthesis; chorismate biosynthesis; chorismate from D-erythrose 4-phosphate and phosphoenolpyruvate: step 7/7. Functionally, catalyzes the anti-1,4-elimination of the C-3 phosphate and the C-6 proR hydrogen from 5-enolpyruvylshikimate-3-phosphate (EPSP) to yield chorismate, which is the branch point compound that serves as the starting substrate for the three terminal pathways of aromatic amino acid biosynthesis. This reaction introduces a second double bond into the aromatic ring system. The sequence is that of Chorismate synthase from Pseudarthrobacter chlorophenolicus (strain ATCC 700700 / DSM 12829 / CIP 107037 / JCM 12360 / KCTC 9906 / NCIMB 13794 / A6) (Arthrobacter chlorophenolicus).